A 357-amino-acid polypeptide reads, in one-letter code: Peptide chain release factor 1 (357 aa).

An N5-methylglutamine modification is found at Gln-234.

Belongs to the prokaryotic/mitochondrial release factor family. In terms of processing, methylated by PrmC. Methylation increases the termination efficiency of RF1.

It is found in the cytoplasm. In terms of biological role, peptide chain release factor 1 directs the termination of translation in response to the peptide chain termination codons UAG and UAA. This is Peptide chain release factor 1 from Arthrobacter sp. (strain FB24).